The following is a 731-amino-acid chain: DNA topoisomerase 1 (731 aa).

Residues Lys17 to Pro130 form the Toprim domain. Mg(2+) is bound by residues Glu23 and Asp96. A Topo IA-type catalytic domain is found at Asp144–Val569. The interval Ser178–Gln183 is interaction with DNA. Tyr312 serves as the catalytic O-(5'-phospho-DNA)-tyrosine intermediate. 3 C4-type zinc fingers span residues Cys591–Cys617, Cys628–Cys657, and Cys670–Cys696.

It belongs to the type IA topoisomerase family. In terms of assembly, monomer. Requires Mg(2+) as cofactor.

It catalyses the reaction ATP-independent breakage of single-stranded DNA, followed by passage and rejoining.. Its function is as follows. Releases the supercoiling and torsional tension of DNA, which is introduced during the DNA replication and transcription, by transiently cleaving and rejoining one strand of the DNA duplex. Introduces a single-strand break via transesterification at a target site in duplex DNA. The scissile phosphodiester is attacked by the catalytic tyrosine of the enzyme, resulting in the formation of a DNA-(5'-phosphotyrosyl)-enzyme intermediate and the expulsion of a 3'-OH DNA strand. The free DNA strand then undergoes passage around the unbroken strand, thus removing DNA supercoils. Finally, in the religation step, the DNA 3'-OH attacks the covalent intermediate to expel the active-site tyrosine and restore the DNA phosphodiester backbone. This chain is DNA topoisomerase 1, found in Treponema pallidum (strain Nichols).